The sequence spans 361 residues: Phospho-N-acetylmuramoyl-pentapeptide-transferase (361 aa).

10 consecutive transmembrane segments (helical) span residues 25 to 45, 73 to 93, 97 to 117, 134 to 154, 168 to 188, 200 to 220, 237 to 257, 264 to 284, 289 to 309, and 338 to 358; these read RAVL…PAVI, TMGG…WADL, YVWL…VDDW, YFWQ…TASL, ATFG…IVGA, GLAI…AYVA, AGEL…FLWF, VFMG…VAVV, IILF…MIQV, and QVVV…LSSL.

The protein belongs to the glycosyltransferase 4 family. MraY subfamily. It depends on Mg(2+) as a cofactor.

The protein localises to the cell inner membrane. It carries out the reaction UDP-N-acetyl-alpha-D-muramoyl-L-alanyl-gamma-D-glutamyl-meso-2,6-diaminopimeloyl-D-alanyl-D-alanine + di-trans,octa-cis-undecaprenyl phosphate = di-trans,octa-cis-undecaprenyl diphospho-N-acetyl-alpha-D-muramoyl-L-alanyl-D-glutamyl-meso-2,6-diaminopimeloyl-D-alanyl-D-alanine + UMP. Its pathway is cell wall biogenesis; peptidoglycan biosynthesis. Functionally, catalyzes the initial step of the lipid cycle reactions in the biosynthesis of the cell wall peptidoglycan: transfers peptidoglycan precursor phospho-MurNAc-pentapeptide from UDP-MurNAc-pentapeptide onto the lipid carrier undecaprenyl phosphate, yielding undecaprenyl-pyrophosphoryl-MurNAc-pentapeptide, known as lipid I. The polypeptide is Phospho-N-acetylmuramoyl-pentapeptide-transferase (Thiobacillus denitrificans (strain ATCC 25259 / T1)).